The primary structure comprises 367 residues: Beta sliding clamp (367 aa).

Belongs to the beta sliding clamp family. As to quaternary structure, forms a ring-shaped head-to-tail homodimer around DNA which binds and tethers DNA polymerases and other proteins to the DNA. The DNA replisome complex has a single clamp-loading complex (3 tau and 1 each of delta, delta', psi and chi subunits) which binds 3 Pol III cores (1 core on the leading strand and 2 on the lagging strand) each with a beta sliding clamp dimer. Additional proteins in the replisome are other copies of gamma, psi and chi, Ssb, DNA helicase and RNA primase.

It localises to the cytoplasm. In terms of biological role, confers DNA tethering and processivity to DNA polymerases and other proteins. Acts as a clamp, forming a ring around DNA (a reaction catalyzed by the clamp-loading complex) which diffuses in an ATP-independent manner freely and bidirectionally along dsDNA. Initially characterized for its ability to contact the catalytic subunit of DNA polymerase III (Pol III), a complex, multichain enzyme responsible for most of the replicative synthesis in bacteria; Pol III exhibits 3'-5' exonuclease proofreading activity. The beta chain is required for initiation of replication as well as for processivity of DNA replication. This chain is Beta sliding clamp (dnaN), found in Pseudomonas aeruginosa (strain ATCC 15692 / DSM 22644 / CIP 104116 / JCM 14847 / LMG 12228 / 1C / PRS 101 / PAO1).